The sequence spans 321 residues: Agamous-like MADS-box protein AGL80 (321 aa).

Positions 1-61 (MTRKKVKLAY…DTNPEVWPSN (61 aa)) constitute an MADS-box domain. Positions 89 to 114 (FLKQRIAKATETLRRQRKDSRELEMT) form a coiled coil.

Interacts with AGL61 and AGL62. Forms a heterodimer with AGL61. Interacts with MEE14/CBP1. In terms of tissue distribution, expressed in the central cell of the female gametophyte and in early endosperm. Also detected in ovaries, young siliques, roots, leaves, stems, young flowers and anthers.

Its subcellular location is the nucleus. Its function is as follows. Probable transcription factor. Controls central cell differentiation during female gametophyte development. Required for the expression of DEMETER and DD46, but not for the expression of FIS2. Probable transcription factor that may function in the maintenance of the proper function of the central cell in pollen tube attraction. This is Agamous-like MADS-box protein AGL80 (AGL80) from Arabidopsis thaliana (Mouse-ear cress).